The following is a 245-amino-acid chain: Large ribosomal subunit protein uL3 (245 aa).

Gln151 is subject to N5-methylglutamine. A disordered region spans residues 214–245 (KDAPQPGKYRLANSAAPQPAEADAASDTGAQA). Positions 225–245 (ANSAAPQPAEADAASDTGAQA) are enriched in low complexity.

The protein belongs to the universal ribosomal protein uL3 family. Part of the 50S ribosomal subunit. Forms a cluster with proteins L14 and L19. Post-translationally, methylated by PrmB.

Its function is as follows. One of the primary rRNA binding proteins, it binds directly near the 3'-end of the 23S rRNA, where it nucleates assembly of the 50S subunit. In Methylocella silvestris (strain DSM 15510 / CIP 108128 / LMG 27833 / NCIMB 13906 / BL2), this protein is Large ribosomal subunit protein uL3.